Here is a 92-residue protein sequence, read N- to C-terminus: Small ribosomal subunit protein uS15c (92 aa).

It belongs to the universal ribosomal protein uS15 family. In terms of assembly, part of the 30S ribosomal subunit.

Its subcellular location is the plastid. The protein localises to the chloroplast. In Carica papaya (Papaya), this protein is Small ribosomal subunit protein uS15c (rps15).